The following is a 59-amino-acid chain: Beta-defensin 134 (59 aa).

Residues 1–19 (MKPLLVVFVFLFLWDPVLA) form the signal peptide. 3 cysteine pairs are disulfide-bonded: Cys25-Cys51, Cys31-Cys45, and Cys35-Cys52.

This sequence belongs to the beta-defensin family.

Its subcellular location is the secreted. Functionally, has antibacterial activity. This is Beta-defensin 134 (DEFB134) from Pan troglodytes (Chimpanzee).